The primary structure comprises 190 residues: Elongation factor P-like protein (190 aa).

It belongs to the elongation factor P family.

In Serratia proteamaculans (strain 568), this protein is Elongation factor P-like protein.